Reading from the N-terminus, the 522-residue chain is Putative aldehyde dehydrogenase-like protein C21C3 (522 aa).

Catalysis depends on Glu-239, which acts as the Proton acceptor. The active-site Nucleophile is Cys-273.

The protein belongs to the aldehyde dehydrogenase family.

The protein resides in the cytoplasm. The protein localises to the nucleus. The sequence is that of Putative aldehyde dehydrogenase-like protein C21C3 from Schizosaccharomyces pombe (strain 972 / ATCC 24843) (Fission yeast).